A 313-amino-acid polypeptide reads, in one-letter code: Olfactory receptor 2B6 (313 aa).

Over 1–27 (MSWANESITGEFVLLGFSDQPWLEFPL) the chain is Extracellular. Asn5 carries an N-linked (GlcNAc...) asparagine glycan. The helical transmembrane segment at 28–48 (FVVFLTSYIVTIFGNLNIILV) threads the bilayer. Residues 49-57 (SHLDPKLHT) are Cytoplasmic-facing. Residues 58 to 78 (PMYFFLTNLSVIDLCYITCTV) form a helical membrane-spanning segment. At 79–97 (PQMLVNLRSIRKVISFGGC) the chain is on the extracellular side. A disulfide bond links Cys97 and Cys189. Residues 98-118 (VVQLFMFLALGATECVLLPVM) form a helical membrane-spanning segment. Topologically, residues 119–143 (SFDRFVAICRPLHYSVIMHQRLCLQ) are cytoplasmic. A helical membrane pass occupies residues 144 to 164 (LAAVSWIIGFGNSVWLSILTL). The Extracellular portion of the chain corresponds to 165–200 (QLPRCGHYVIDHFLCEVPALLKLSCVDVTANEAELF). A helical transmembrane segment spans residues 201 to 221 (FVSVFFHLTPLSLILTSYAFI). The Cytoplasmic segment spans residues 222–244 (ARAILKIQSAEGRQKAFGTCSSH). Residues 245-265 (LIVVSLFYGTALSVYFLPPSP) form a helical membrane-spanning segment. The Extracellular segment spans residues 266–271 (HSKNRR). A helical transmembrane segment spans residues 272 to 292 (KMVPLFYGIIAPMLNPLIYTL). Residues 293-313 (RNKEVKDAFKRLIKRVFLSKN) lie on the Cytoplasmic side of the membrane.

This sequence belongs to the G-protein coupled receptor 1 family.

It is found in the cell membrane. Odorant receptor. The chain is Olfactory receptor 2B6 from Mus musculus (Mouse).